The following is a 320-amino-acid chain: o-succinylbenzoate synthase (320 aa).

The active-site Proton donor is K133. Residues D161, E190, and D213 each coordinate Mg(2+). The active-site Proton acceptor is the K235.

Belongs to the mandelate racemase/muconate lactonizing enzyme family. MenC type 1 subfamily. A divalent metal cation is required as a cofactor.

The enzyme catalyses (1R,6R)-6-hydroxy-2-succinyl-cyclohexa-2,4-diene-1-carboxylate = 2-succinylbenzoate + H2O. The protein operates within quinol/quinone metabolism; 1,4-dihydroxy-2-naphthoate biosynthesis; 1,4-dihydroxy-2-naphthoate from chorismate: step 4/7. Its pathway is quinol/quinone metabolism; menaquinone biosynthesis. Its function is as follows. Converts 2-succinyl-6-hydroxy-2,4-cyclohexadiene-1-carboxylate (SHCHC) to 2-succinylbenzoate (OSB). This chain is o-succinylbenzoate synthase, found in Salmonella heidelberg (strain SL476).